The primary structure comprises 583 residues: Cell division protein FtsZ (583 aa).

GTP-binding positions include 24–28, 111–113, Glu142, Arg146, and Asp190; these read GGGGN and GTG. Disordered stretches follow at residues 391 to 425 and 510 to 583; these read HQQPSQDFRPQSKLFASSPAEAPAALRPAQPVQQA and TNSL…RQSN. A compositionally biased stretch (low complexity) spans 412–425; that stretch reads APAALRPAQPVQQA.

It belongs to the FtsZ family. Homodimer. Polymerizes to form a dynamic ring structure in a strictly GTP-dependent manner. Interacts directly with several other division proteins.

The protein localises to the cytoplasm. In terms of biological role, essential cell division protein that forms a contractile ring structure (Z ring) at the future cell division site. The regulation of the ring assembly controls the timing and the location of cell division. One of the functions of the FtsZ ring is to recruit other cell division proteins to the septum to produce a new cell wall between the dividing cells. Binds GTP and shows GTPase activity. The sequence is that of Cell division protein FtsZ from Rhizobium radiobacter (Agrobacterium tumefaciens).